The chain runs to 793 residues: Phenylalanine--tRNA ligase beta subunit (793 aa).

The tRNA-binding domain occupies 39-148; sequence AAPFKGVKAA…EGDFPGVDLH (110 aa). Positions 401 to 476 constitute a B5 domain; that stretch reads PPQATIILRK…RLYGYDRLPS (76 aa). Positions 454, 460, 463, and 464 each coordinate Mg(2+). The region spanning 699 to 792 is the FDX-ACB domain; sequence SKFPAIRRDI…LVTELGAIIR (94 aa).

The protein belongs to the phenylalanyl-tRNA synthetase beta subunit family. Type 1 subfamily. As to quaternary structure, tetramer of two alpha and two beta subunits. It depends on Mg(2+) as a cofactor.

Its subcellular location is the cytoplasm. The enzyme catalyses tRNA(Phe) + L-phenylalanine + ATP = L-phenylalanyl-tRNA(Phe) + AMP + diphosphate + H(+). The protein is Phenylalanine--tRNA ligase beta subunit of Nitrosococcus oceani (strain ATCC 19707 / BCRC 17464 / JCM 30415 / NCIMB 11848 / C-107).